We begin with the raw amino-acid sequence, 1345 residues long: Mediator of RNA polymerase II transcription subunit 13 (1345 aa).

Disordered regions lie at residues 363–387 (KSQT…SPYP) and 402–537 (FMAS…AESG). Residues 364-375 (SQTNQQQTSSNS) are compositionally biased toward low complexity. The span at 406-415 (PSVSGNSNEL) shows a compositional bias: polar residues. Acidic residues predominate over residues 469–482 (LFGEEDEDEDDADL). A compositionally biased stretch (polar residues) spans 486–501 (SNNDSTGESNANNSKG).

It belongs to the Mediator complex subunit 13 family. Component of the SRB8-11 complex, which itself associates with the Mediator complex.

It localises to the nucleus. Its function is as follows. Component of the SRB8-11 complex. The SRB8-11 complex is a regulatory module of the Mediator complex which is itself involved in regulation of basal and activated RNA polymerase II-dependent transcription. The SRB8-11 complex may be involved in the transcriptional repression of a subset of genes regulated by Mediator. It may inhibit the association of the Mediator complex with RNA polymerase II to form the holoenzyme complex. The chain is Mediator of RNA polymerase II transcription subunit 13 (SSN2) from Candida glabrata (strain ATCC 2001 / BCRC 20586 / JCM 3761 / NBRC 0622 / NRRL Y-65 / CBS 138) (Yeast).